Here is a 387-residue protein sequence, read N- to C-terminus: MKSTHSKIKIAHVQLMPLLSGVQRVSLQEFELLPNEQFDINLICKESGPLTDYLDDSVRAFFVPTLCRNISLIKDMKSLISLYKLLKKEKYDIVHTHSSKTGILGRIAARLAGVPCVVHTVHGFAFESTKRKSVKLVYKWLEIFAAKCTTRLICLHNEDKEICIKELYVDPMKISVIPNGVDLEKFAPAINKGDLKEKILGLKRNSFVFTMVGRLWPQKNPLYFAEAAKYIIENNLIPDSVFVIVGDGELMNDLKYNYQTDMNLKKRLLLLGWRNDIPNILKASDVFVLPSLWEGMPLAILEAQSTGLPCIVSNINGNNCLVKNEFDGFLIELNDIDSFINALVRVTDDKVLNIMSKNCRNKIVNGFNIVKRVDKIKDLYIDMVVNK.

This sequence belongs to the glycosyltransferase group 1 family. Glycosyltransferase 4 subfamily. It depends on Mg(2+) as a cofactor. The cofactor is Mn(2+). Fe(2+) is required as a cofactor.

The enzyme catalyses N-acetyl-alpha-D-glucosaminyl-di-trans,octa-cis-undecaprenyl diphosphate + UDP-alpha-D-galactose = alpha-D-Gal-(1-&gt;3)-alpha-D-GlcNAc-di-trans,octa-cis-undecaprenyl diphosphate + UDP + H(+). Its pathway is bacterial outer membrane biogenesis; LPS O-antigen biosynthesis. Its function is as follows. Involved in the biosynthesis of the lipopolysaccharide (LPS) O-antigen region. Catalyzes the transfer of galactose from UDP-galactose to GlcNAc-undecaprenyl diphosphate via an alpha1,3-linkage. Has strict substrate specificity. The chain is UDP-Gal:alpha-D-GlcNAc-diphosphoundecaprenol alpha-1,3-galactosyltransferase from Escherichia coli.